The sequence spans 343 residues: Heat-inducible transcription repressor HrcA (343 aa).

Belongs to the HrcA family.

In terms of biological role, negative regulator of class I heat shock genes (grpE-dnaK-dnaJ and groELS operons). Prevents heat-shock induction of these operons. This chain is Heat-inducible transcription repressor HrcA, found in Bacillus cytotoxicus (strain DSM 22905 / CIP 110041 / 391-98 / NVH 391-98).